We begin with the raw amino-acid sequence, 266 residues long: Undecaprenyl-diphosphatase (266 aa).

Helical transmembrane passes span 1–21 (MDTF…FLPI), 39–59 (QGLS…VIYF), 87–107 (WWII…KDFI), 111–131 (LRSA…LWWA), 149–169 (ALLI…RSGA), 183–203 (AAAR…AILV), 218–238 (ALTL…HYFL), and 246–266 (MTPF…FIFL).

Belongs to the UppP family.

The protein localises to the cell inner membrane. The enzyme catalyses di-trans,octa-cis-undecaprenyl diphosphate + H2O = di-trans,octa-cis-undecaprenyl phosphate + phosphate + H(+). Catalyzes the dephosphorylation of undecaprenyl diphosphate (UPP). Confers resistance to bacitracin. The sequence is that of Undecaprenyl-diphosphatase from Shewanella sp. (strain MR-7).